We begin with the raw amino-acid sequence, 1164 residues long: MLDVSNFERMRIGLASPEQIRAWSSGEVKKPETINYRTLKPERDGLFCERIFGPTKDWECHCGKYKRVRYKGIVCDRCGVEVTRAKVRRERMGHIELAAPVSHIWYFKGIPSRMGLILDMSPRSLEKVLYFVAYVVIDPGDTPLVKKQLLTEAEYREYRDKYGNAFRAAMGAEAIKELLQEIDLDQLAAELRQELKESSGQRKIRALRRLEVVEAFRSSGNRPEWMIMDVIPVIPPELRPMVQLDGGRFATSDLNDLYRRVINRNNRLKRLLDLGAPDIIVRNEKRMLQEAVDALIDNGRRGRPVTGPGNRPLKSLSDMLKGKQGRFRQNLLGKRVDYSGRSVIVVGPELKMHQCGLPKEMALELFKPFVMKRLVDKGLAHNIKSAKRMVERVKNEVWDVLEEVISEHPVLLNRAPTLHRLGIQAFEPVLVEGRAIQIHPLVCTAYNADFDGDQMAVHVPLSAEAQAEARLLMMAAHHILNPKDGRPVVSPTQDMVLGAYYLTTVSKGARGEGKAFSSYDEAYMAYLNKVIDMHAMIKVRQEDGQLLETTIGRLIFNREIPIPKELGYYNCEVDKKKLTEIIARCYQLLGTEATATLLDGIKKVGFHYSTLAGFTIGIDDIVVPGDKKEIIAETESAVEKIDQQYRKGLISEEERYQKVISLWNNATDTLTKKLMAGMDKFNPVFMMANSGARGNVQQIRQLAGMRGLMADPSGRIIDLPIKANFREGLTVLEYFISTHGARKGLADTALRTADSGYLTRRLVDVAQDVIVREDDCGTTAGIEVREIQEGNQVIEKMEERLAGRYALEDVRHPETGELLVAANTMIDDDAARAIVQAGIKTVKIRSVLTCKTRYGVCRKCYGRDLATGREVEIGEAVGIIAAQSIGEPGTQLTMRTFHTGGVAGDDITQGLSRVEELFEARKPKGQAIIAETTGTITAITEVRGRREIEITDDSGEKFSYQVPYGSRLKVAEGDHVEAGDELTGGSVNPHDLLKVKGVRGVQLYLLREVQRVYRLQGVDINDKHIEVMIRQMLRKVKVEDQGDTDLLPGSLVDAFDFEDANRKVQEIGGKPATARPVLLGITKASLATDSFLSAASFQETTRVLTEAAIKGRVDPLLGLKENVIIGKLIPAGTGMSRYRQLKLVTPAVDQEEDGAEAVDMATGK.

Residues Cys60, Cys62, Cys75, and Cys78 each contribute to the Zn(2+) site. Asp449, Asp451, and Asp453 together coordinate Mg(2+). Residues Cys776, Cys850, Cys857, and Cys860 each coordinate Zn(2+).

This sequence belongs to the RNA polymerase beta' chain family. The RNAP catalytic core consists of 2 alpha, 1 beta, 1 beta' and 1 omega subunit. When a sigma factor is associated with the core the holoenzyme is formed, which can initiate transcription. Mg(2+) is required as a cofactor. Zn(2+) serves as cofactor.

It carries out the reaction RNA(n) + a ribonucleoside 5'-triphosphate = RNA(n+1) + diphosphate. Its function is as follows. DNA-dependent RNA polymerase catalyzes the transcription of DNA into RNA using the four ribonucleoside triphosphates as substrates. This chain is DNA-directed RNA polymerase subunit beta', found in Moorella thermoacetica (strain ATCC 39073 / JCM 9320).